The primary structure comprises 325 residues: MITQRQLSILNAIVEDYVDLGQPIGSKALIDRHHLDVSPATIRNEMKQLEDLNFLEKTHSSSGRSPSEEGFRLYVDQLLKQTSRQNKNKIQRLNQLLIENHYDISSALSYFANELSMKSHYATLVVRPKHSEEMINNVHLIKANDSIMILVIIYNSGHVEHFHLNSALELSSDRLIAISNFISNNNIEISAKLSDKIRSFANSNEENQFINDIVKMINSHISKQSNSIFLGGKVKLIDALNESNVSSIQPILQYLESERITELLQTISTNDINVKIGKEIDESLSDISIVTSQYHFDNSLKGQIAVIGPTAMRYQNVIQLLNQIW.

It belongs to the HrcA family.

Functionally, negative regulator of class I heat shock genes (grpE-dnaK-dnaJ and groELS operons). Prevents heat-shock induction of these operons. The chain is Heat-inducible transcription repressor HrcA from Staphylococcus haemolyticus (strain JCSC1435).